Reading from the N-terminus, the 346-residue chain is MLVLGIESSCDETGLALYDTERGLLAHALHSQIAMHREYGGVVPELASRDHIRRALPLLEEVLAASGARRDDIDAIAFTQGPGLAGALLVGASIANALAFAWDKPTIGIHHLEGHLLSPLLVAEPPPFPFVALLVSGGHTQLMRVSDVGVYETLGETLDDAAGEAFDKTAKLLGLGYPGGPEVSRLAEAGTPGAVVLPRPMLHSVDLDFSFSGLKTAVLTQMKKLEAAHAGGAVLERAKADLARGFVDAAVDVLVAKSLAALKATRLKRLVVAGGVGANRQLRAALSAAAQKRGFDVHYPDLALCTDNGAMIALAGALRLARWPSQASRDYAFTVKPRWDLASLAR.

Residues His-111 and His-115 each coordinate Fe cation. Substrate contacts are provided by residues 134–138 (LVSGG), Asp-167, Gly-180, and Asn-279. Asp-307 contributes to the Fe cation binding site.

The protein belongs to the KAE1 / TsaD family. The cofactor is Fe(2+).

It localises to the cytoplasm. It catalyses the reaction L-threonylcarbamoyladenylate + adenosine(37) in tRNA = N(6)-L-threonylcarbamoyladenosine(37) in tRNA + AMP + H(+). Its function is as follows. Required for the formation of a threonylcarbamoyl group on adenosine at position 37 (t(6)A37) in tRNAs that read codons beginning with adenine. Is involved in the transfer of the threonylcarbamoyl moiety of threonylcarbamoyl-AMP (TC-AMP) to the N6 group of A37, together with TsaE and TsaB. TsaD likely plays a direct catalytic role in this reaction. The sequence is that of tRNA N6-adenosine threonylcarbamoyltransferase from Burkholderia pseudomallei (strain K96243).